Consider the following 275-residue polypeptide: Acetyl-coenzyme A carboxylase carboxyl transferase subunit beta (275 aa).

Positions 21–275 (GLWIKCQCGA…IKIIGMHQAG (255 aa)) constitute a CoA carboxyltransferase N-terminal domain. Residues cysteine 26, cysteine 28, cysteine 44, and cysteine 47 each contribute to the Zn(2+) site. The C4-type zinc-finger motif lies at 26-47 (CQCGAILFAKDLERNLKVCQKC).

It belongs to the AccD/PCCB family. As to quaternary structure, acetyl-CoA carboxylase is a heterohexamer composed of biotin carboxyl carrier protein (AccB), biotin carboxylase (AccC) and two subunits each of ACCase subunit alpha (AccA) and ACCase subunit beta (AccD). The cofactor is Zn(2+).

It is found in the cytoplasm. It carries out the reaction N(6)-carboxybiotinyl-L-lysyl-[protein] + acetyl-CoA = N(6)-biotinyl-L-lysyl-[protein] + malonyl-CoA. It participates in lipid metabolism; malonyl-CoA biosynthesis; malonyl-CoA from acetyl-CoA: step 1/1. Functionally, component of the acetyl coenzyme A carboxylase (ACC) complex. Biotin carboxylase (BC) catalyzes the carboxylation of biotin on its carrier protein (BCCP) and then the CO(2) group is transferred by the transcarboxylase to acetyl-CoA to form malonyl-CoA. This chain is Acetyl-coenzyme A carboxylase carboxyl transferase subunit beta, found in Desulforudis audaxviator (strain MP104C).